The following is a 110-amino-acid chain: Cuticle protein 13 (110 aa).

The polypeptide is Cuticle protein 13 (Limulus polyphemus (Atlantic horseshoe crab)).